Consider the following 188-residue polypeptide: Ribosomal RNA small subunit methyltransferase G (188 aa).

Residues G69, F74, 119–120 (VQ), and R134 each bind S-adenosyl-L-methionine.

Belongs to the methyltransferase superfamily. RNA methyltransferase RsmG family.

Its subcellular location is the cytoplasm. The catalysed reaction is guanosine(527) in 16S rRNA + S-adenosyl-L-methionine = N(7)-methylguanosine(527) in 16S rRNA + S-adenosyl-L-homocysteine. Functionally, specifically methylates the N7 position of guanine in position 527 of 16S rRNA. This Campylobacter jejuni subsp. jejuni serotype O:2 (strain ATCC 700819 / NCTC 11168) protein is Ribosomal RNA small subunit methyltransferase G.